The primary structure comprises 261 residues: Ribonuclease PH (261 aa).

Phosphate is bound by residues Arg-86 and 124 to 126 (GTR).

The protein belongs to the RNase PH family. Homohexameric ring arranged as a trimer of dimers.

It catalyses the reaction tRNA(n+1) + phosphate = tRNA(n) + a ribonucleoside 5'-diphosphate. In terms of biological role, phosphorolytic 3'-5' exoribonuclease that plays an important role in tRNA 3'-end maturation. Removes nucleotide residues following the 3'-CCA terminus of tRNAs; can also add nucleotides to the ends of RNA molecules by using nucleoside diphosphates as substrates, but this may not be physiologically important. Probably plays a role in initiation of 16S rRNA degradation (leading to ribosome degradation) during starvation. This Persephonella marina (strain DSM 14350 / EX-H1) protein is Ribonuclease PH.